The chain runs to 113 residues: MNRLDFVDQASLRDDIPAFSPGDTINVHVKVIEGVKERIQVFKGVVIRRQGGGIRETFTVRKESYGVGVERTFPVHSPNIDHIEMVIRGDVRRAKLYYLRELRGKKAKIKEKR.

The protein belongs to the bacterial ribosomal protein bL19 family.

Functionally, this protein is located at the 30S-50S ribosomal subunit interface and may play a role in the structure and function of the aminoacyl-tRNA binding site. The protein is Large ribosomal subunit protein bL19 of Mycobacterium leprae (strain Br4923).